The primary structure comprises 1006 residues: Beta-galactosidase (1006 aa).

Residues 1–19 (MKLSSACAIALLAAQAAGA) form the signal peptide. N-linked (GlcNAc...) asparagine glycosylation is present at Asn-156. The active-site Proton donor is Glu-200. Glu-298 (nucleophile) is an active-site residue. N-linked (GlcNAc...) asparagine glycosylation is found at Asn-373, Asn-402, Asn-422, Asn-478, Asn-522, Asn-622, Asn-739, Asn-760, Asn-777, and Asn-805.

This sequence belongs to the glycosyl hydrolase 35 family.

The enzyme catalyses Hydrolysis of terminal non-reducing beta-D-galactose residues in beta-D-galactosides.. Functionally, cleaves beta-linked terminal galactosyl residues from gangliosides, glycoproteins, and glycosaminoglycans. The chain is Beta-galactosidase (lacA) from Aspergillus niger.